Reading from the N-terminus, the 272-residue chain is Acetylglutamate kinase (272 aa).

Substrate contacts are provided by residues 46–47 (GA), R68, and N166.

The protein belongs to the acetylglutamate kinase family. ArgB subfamily.

It localises to the cytoplasm. It carries out the reaction N-acetyl-L-glutamate + ATP = N-acetyl-L-glutamyl 5-phosphate + ADP. The protein operates within amino-acid biosynthesis; L-arginine biosynthesis; N(2)-acetyl-L-ornithine from L-glutamate: step 2/4. Catalyzes the ATP-dependent phosphorylation of N-acetyl-L-glutamate. This chain is Acetylglutamate kinase, found in Dehalococcoides mccartyi (strain ATCC BAA-2266 / KCTC 15142 / 195) (Dehalococcoides ethenogenes (strain 195)).